The primary structure comprises 652 residues: DNA ligase (652 aa).

Residues 29–33 (DSEYD), 78–79 (SL), and glutamate 107 each bind NAD(+). Lysine 109 serves as the catalytic N6-AMP-lysine intermediate. Residues arginine 130, glutamate 164, lysine 278, and lysine 302 each contribute to the NAD(+) site. Zn(2+) is bound by residues cysteine 395, cysteine 398, cysteine 413, and cysteine 418. Residues 577–652 (VADAALSGLT…VRDEAWLESL (76 aa)) form the BRCT domain.

The protein belongs to the NAD-dependent DNA ligase family. LigA subfamily. Mg(2+) serves as cofactor. It depends on Mn(2+) as a cofactor.

It carries out the reaction NAD(+) + (deoxyribonucleotide)n-3'-hydroxyl + 5'-phospho-(deoxyribonucleotide)m = (deoxyribonucleotide)n+m + AMP + beta-nicotinamide D-nucleotide.. DNA ligase that catalyzes the formation of phosphodiester linkages between 5'-phosphoryl and 3'-hydroxyl groups in double-stranded DNA using NAD as a coenzyme and as the energy source for the reaction. It is essential for DNA replication and repair of damaged DNA. This is DNA ligase from Streptococcus pneumoniae serotype 4 (strain ATCC BAA-334 / TIGR4).